Consider the following 126-residue polypeptide: Large ribosomal subunit protein bL12 (126 aa).

It belongs to the bacterial ribosomal protein bL12 family. In terms of assembly, homodimer. Part of the ribosomal stalk of the 50S ribosomal subunit. Forms a multimeric L10(L12)X complex, where L10 forms an elongated spine to which 2 to 4 L12 dimers bind in a sequential fashion. Binds GTP-bound translation factors.

In terms of biological role, forms part of the ribosomal stalk which helps the ribosome interact with GTP-bound translation factors. Is thus essential for accurate translation. The protein is Large ribosomal subunit protein bL12 of Acidobacterium capsulatum (strain ATCC 51196 / DSM 11244 / BCRC 80197 / JCM 7670 / NBRC 15755 / NCIMB 13165 / 161).